Reading from the N-terminus, the 522-residue chain is Aspartic and glutamic acid-rich protein (522 aa).

Residues 1-16 form the signal peptide; that stretch reads MKVFVYLLVTFSLTNA. Composition is skewed to basic and acidic residues over residues 72 to 81 and 93 to 102; these read YDDFFPKDTS and SRNDDGYDLA. The segment at 72–497 is disordered; the sequence is YDDFFPKDTS…KSKDAAQGNI (426 aa). The segment covering 109–125 has biased composition (acidic residues); sequence DDEEAYDDFDEVDDRAD. Basic and acidic residues predominate over residues 142-152; the sequence is KLPAEEESKND. Composition is skewed to acidic residues over residues 153-166, 173-200, 228-261, and 267-283; these read MDEE…EEDK, FAED…EDEV, DNEE…DESD, and EVED…TEEG. The span at 284 to 343 shows a compositional bias: basic and acidic residues; it reads SEIKQNDETEEQPEKKFDADKEHEDAPEPLKEKLSDESKARAEDESDKSEDAAKEIKEPE. The stretch at 319 to 465 forms a coiled coil; the sequence is DESKARAEDE…KSNLALKRDE (147 aa). A compositionally biased stretch (acidic residues) spans 358–374; the sequence is DEAELLDDEAELSDDEA. Basic and acidic residues-rich tracts occupy residues 375–397, 407–453, and 461–491; these read ELSK…KAEK, DEAK…EFAK, and LKRD…KSKD.

Component of the acid-soluble organic matrix of the aragonitic skeleton (at protein level).

It localises to the secreted. This Acropora millepora (Staghorn coral) protein is Aspartic and glutamic acid-rich protein.